The primary structure comprises 54 residues: uncharacterized protein (54 aa).

Residues 13–54 are disordered; the sequence is VAGDSGGNPENISIGTTSGAVVNKGPEQIPKKKKEESKEKEE. Residues 20–32 are compositionally biased toward polar residues; sequence NPENISIGTTSGA. Over residues 41-54 the composition is skewed to basic and acidic residues; sequence IPKKKKEESKEKEE.

This is an uncharacterized protein from Enterobacteria phage T4 (Bacteriophage T4).